We begin with the raw amino-acid sequence, 270 residues long: Putative pyruvate, phosphate dikinase regulatory protein (270 aa).

ADP is bound at residue 151-158 (GVSRTSKT).

This sequence belongs to the pyruvate, phosphate/water dikinase regulatory protein family. PDRP subfamily.

It carries out the reaction N(tele)-phospho-L-histidyl/L-threonyl-[pyruvate, phosphate dikinase] + ADP = N(tele)-phospho-L-histidyl/O-phospho-L-threonyl-[pyruvate, phosphate dikinase] + AMP + H(+). The catalysed reaction is N(tele)-phospho-L-histidyl/O-phospho-L-threonyl-[pyruvate, phosphate dikinase] + phosphate + H(+) = N(tele)-phospho-L-histidyl/L-threonyl-[pyruvate, phosphate dikinase] + diphosphate. Bifunctional serine/threonine kinase and phosphorylase involved in the regulation of the pyruvate, phosphate dikinase (PPDK) by catalyzing its phosphorylation/dephosphorylation. This Ligilactobacillus salivarius (strain UCC118) (Lactobacillus salivarius) protein is Putative pyruvate, phosphate dikinase regulatory protein.